A 953-amino-acid chain; its full sequence is MNIRKPLCSNSVVGACTLVSLTTAVILGHLMLRELMLLPQDLHESSSGLWKTYRPHHQESYEPAPLHIQEHAEQLRAVPTQCDVTPNSRFDCAPDKGITQEQCEARGCCWVPAGQVLNGPVMGQPWCFFPPSYPSYRLENLSSTESGYTATLTRTSPTFFPKDVLTLQLEVLMETDSRLHFMIKDPTSKRYEVPLETPRVLSQAPSPLYSVEFSEEPFGVIVRRKLGGRVLLNTTVAPLFFADQFLQLSTSLPSQHIAGLGEHLSPLMLSTEWTRITLWNRDVAPSQGVNLYGSHPFYLALEDGGLAHGVFLLNSNAMDVVLQPSPALTWRSTGGILDVYVFLGPEPKSVVQQYLDVVGYPFMPPYWGLGFHLCRWGYSSTAIVRQVVENMTRTHFPLDVQWNDLDYMDARRDFTFNQDGFADFPDMVHELHQGGRRYMMIVDPAISSSGPAGSYRPYDEGLRRGVFITNETGQPLIGKVWPGSTAFPDFTNPETLDWWQDMVSEFHAQVPFDGMWIDMNEPSNFIRGSQQGCPDNELENPPYVPGVVGGALQAATICASSHQFLSTHYNLHNLYGLTEAIASSRALVKTRGTRPFVISRSTFAGHGRYAGHWTGDVWSSWEHLAYSVPEILQFNLLGVPLVGADICGFQGNTTEELCVRWTQLGAFYPFMRNHNDLNSLPQEPYRFSETAQQAMRKAFTLRYALLPYLYTLFHGAHVKGDTVARPLFLEFPEDPSTWSVDRQLLWGPALLITPVLEPGKTDVTGYFPKGMWYNLQMVPVETLGSLPSSSPASSFRSIVHSKGQWLTLEAPLDTINVHLRAGYIIPLQGPSLTTTESRKQPMALAVALTESGEASGELFWDDGESLGVLERGAYTLVTFSAKNNTIVNKLVHVTKEGGELQLREVTILGVTTAPTQVLSNGISVSNFTYSPDDKSLSIPVSLLMGERFQIDWS.

A signal peptide spans 1–27; sequence MNIRKPLCSNSVVGACTLVSLTTAVIL. Residues 28–69 constitute a propeptide that is removed on maturation; that stretch reads GHLMLRELMLLPQDLHESSSGLWKTYRPHHQESYEPAPLHIQ. Positions 80 to 131 constitute a P-type domain; it reads TQCDVTPNSRFDCAPDKGITQEQCEARGCCWVPAGQVLNGPVMGQPWCFFPP. Cystine bridges form between C82-C109, C92-C108, and C103-C127. Residues N140, N233, and N390 are each glycosylated (N-linked (GlcNAc...) asparagine). Position 404 (D404) interacts with substrate. N470 carries an N-linked (GlcNAc...) asparagine glycan. Residue D518 is the Nucleophile of the active site. Residue E521 is part of the active site. C533 and C558 are joined by a disulfide. R600 and D616 together coordinate substrate. Cysteines 647 and 658 form a disulfide. N652 carries an N-linked (GlcNAc...) asparagine glycan. H674 contacts substrate. N883 and N926 each carry an N-linked (GlcNAc...) asparagine glycan.

The protein belongs to the glycosyl hydrolase 31 family.

It localises to the lysosome. Its subcellular location is the lysosome membrane. It carries out the reaction Hydrolysis of terminal, non-reducing (1-&gt;4)-linked alpha-D-glucose residues with release of alpha-D-glucose.. Functionally, essential for the degradation of glycogen in lysosomes. Has highest activity on alpha-1,4-linked glycosidic linkages, but can also hydrolyze alpha-1,6-linked glucans. The protein is Lysosomal alpha-glucosidase (Gaa) of Rattus norvegicus (Rat).